The following is a 599-amino-acid chain: Exocyst complex component EXO70B2 (599 aa).

The tract at residues 38 to 58 (GASGNRGGDPRPTPSRGGSNV) is disordered.

The protein belongs to the EXO70 family. Self interacts. Interacts with EXO70B1. Interacts with the exocyst subunits EXO70H1, SEC5A and SEC15B. Binds to SNAP33. Subunit of the exocyst complex that mediates vesicle tethering during exocytosis. Binds to PUB22. Post-translationally, target of the E3 ubiquitin-protein ligase PUB22 that mediates its ubiquitination and degradation via the 26S proteasome to attenuate pathogen-associated molecular patterns (PAMP)-induced signaling, especially is response to the bacterial elicitor flg22. In terms of tissue distribution, mostly expressed in leaves and, to a lower extent, in roots, cotyledons, internodes, flower buds, siliques and anthers.

Its subcellular location is the cytoplasmic vesicle. It localises to the phagosome. It is found in the cytoplasm. The protein localises to the nucleus. Its function is as follows. Component of an exocyst subcomplex specifically involved in autophagy-related, Golgi-independent membrane traffic to the vacuole. Regulates autophagosome formation and autophagy-related Golgi-independent import into the vacuole. Positive regulator of defense responses to pathogenic bacteria (e.g. P.syringae pv. maculicola), to the biotrophic oomycete H.arabidopsidis and to fungi (e.g. B.graminis hordei), especially in cell wall apposition formation related to plant defense. Required for both immediate and later responses triggered by pathogen-associated molecular patterns (PAMPs). Positive regulator of abscisic acid (ABA)-independent mannitol (drought)-promoted stomatal closure. The protein is Exocyst complex component EXO70B2 of Arabidopsis thaliana (Mouse-ear cress).